Here is a 313-residue protein sequence, read N- to C-terminus: Homoserine O-succinyltransferase (313 aa).

The active-site Acyl-thioester intermediate is Cys-142. Substrate-binding residues include Lys-163 and Ser-192. His-235 functions as the Proton acceptor in the catalytic mechanism. Glu-237 is a catalytic residue. Arg-249 provides a ligand contact to substrate.

This sequence belongs to the MetA family.

It is found in the cytoplasm. It carries out the reaction L-homoserine + succinyl-CoA = O-succinyl-L-homoserine + CoA. The protein operates within amino-acid biosynthesis; L-methionine biosynthesis via de novo pathway; O-succinyl-L-homoserine from L-homoserine: step 1/1. Functionally, transfers a succinyl group from succinyl-CoA to L-homoserine, forming succinyl-L-homoserine. This is Homoserine O-succinyltransferase from Shewanella baltica (strain OS223).